The primary structure comprises 717 residues: Choline transporter-like protein 5 (717 aa).

Residues 1–24 (MNDTEKPADTASEEEDFGDPRTYD) form a disordered region. The Cytoplasmic portion of the chain corresponds to 1 to 38 (MNDTEKPADTASEEEDFGDPRTYDPDFKGPVSNRSCTD). Residues 39 to 59 (VLCCMIFLLCIVGYIVLGLVA) form a helical membrane-spanning segment. Residues 60 to 242 (WVHGDPRRAA…KVFEDYATTW (183 aa)) lie on the Extracellular side of the membrane. 2 N-linked (GlcNAc...) asparagine glycosylation sites follow: asparagine 88 and asparagine 190. A helical transmembrane segment spans residues 243–263 (YWILIGLMIAMVLSWIFLILL). Over 264–265 (RF) the chain is Cytoplasmic. Residues 266–286 (IAGCLFWVFMIGVIGIIGYGI) form a helical membrane-spanning segment. Residues 287–325 (WHCYQQYTNLQEHPRSVLTVYDIGIQTNISMYFELQQTW) are Extracellular-facing. The N-linked (GlcNAc...) asparagine glycan is linked to asparagine 314. The helical transmembrane segment at 326–346 (FTLMIILCIIEVIVILMLIFL) threads the bilayer. The Cytoplasmic portion of the chain corresponds to 347–351 (RNRIR). The helical transmembrane segment at 352–372 (VAIILLKEGSKAIGYVPSTLV) threads the bilayer. Residues 373 to 374 (YP) are Extracellular-facing. The helical transmembrane segment at 375-395 (ALTFILLSICICYWVVTAVFL) threads the bilayer. Over 396–460 (ATSGVPVYKV…QYIPTFHVYN (65 aa)) the chain is Cytoplasmic. A helical transmembrane segment spans residues 461-481 (LFVFLWLINFVIALGQCALAG). The Extracellular segment spans residues 482–515 (AFATYYWAMKKPDDIPRYPLFTAFGRAIRYHTGS). Residues 516–536 (LAFGSLIIALIQMFKIVLEYL) traverse the membrane as a helical segment. The Cytoplasmic portion of the chain corresponds to 537–610 (NHRLKRTENT…KVAVTDEVTY (74 aa)). A helical membrane pass occupies residues 611–631 (FVLFLGKILVAGSIGVLAFLF). Over 632 to 649 (FTQRLPVIAQGPASLNYY) the chain is Extracellular. The helical transmembrane segment at 650 to 670 (WVPLLTVILGSYLIAHGFFSV) threads the bilayer. Over 671 to 717 (YAMCVETIFICFLEDLERNDGSTARPYYVSQPLLKIFQEENLQTKQQ) the chain is Cytoplasmic.

The protein belongs to the CTL (choline transporter-like) family.

Its subcellular location is the cell membrane. The enzyme catalyses choline(out) + n H(+)(in) = choline(in) + n H(+)(out). Functionally, choline/H+ antiporter. The polypeptide is Choline transporter-like protein 5 (SLC44A5) (Macaca fascicularis (Crab-eating macaque)).